Here is a 311-residue protein sequence, read N- to C-terminus: tRNA dimethylallyltransferase (311 aa).

Glycine 12 to threonine 19 contributes to the ATP binding site. Threonine 14–threonine 19 contributes to the substrate binding site. 2 interaction with substrate tRNA regions span residues aspartate 37 to methionine 40 and glutamine 161 to arginine 165.

This sequence belongs to the IPP transferase family. As to quaternary structure, monomer. Mg(2+) serves as cofactor.

The catalysed reaction is adenosine(37) in tRNA + dimethylallyl diphosphate = N(6)-dimethylallyladenosine(37) in tRNA + diphosphate. In terms of biological role, catalyzes the transfer of a dimethylallyl group onto the adenine at position 37 in tRNAs that read codons beginning with uridine, leading to the formation of N6-(dimethylallyl)adenosine (i(6)A). This Coxiella burnetii (strain Dugway 5J108-111) protein is tRNA dimethylallyltransferase.